Consider the following 209-residue polypeptide: Ubiquinone biosynthesis protein COQ4 homolog 2, mitochondrial (209 aa).

Zn(2+) is bound by residues histidine 118, aspartate 119, histidine 122, and glutamate 134.

The protein belongs to the COQ4 family. In terms of assembly, component of a multi-subunit COQ enzyme complex. Zn(2+) is required as a cofactor.

It is found in the mitochondrion inner membrane. The enzyme catalyses a 4-hydroxy-3-methoxy-5-(all-trans-polyprenyl)benzoate + H(+) = a 2-methoxy-6-(all-trans-polyprenyl)phenol + CO2. The protein operates within cofactor biosynthesis; ubiquinone biosynthesis. Lyase that catalyzes the C1-decarboxylation of 4-hydroxy-3-methoxy-5-(all-trans-polyprenyl)benzoic acid into 2-methoxy-6-(all-trans-polyprenyl)phenol during ubiquinone biosynthesis. The polypeptide is Ubiquinone biosynthesis protein COQ4 homolog 2, mitochondrial (Paramecium tetraurelia).